A 488-amino-acid polypeptide reads, in one-letter code: Monodehydroascorbate reductase 4, peroxisomal (488 aa).

Topologically, residues 1–3 (MGR) are cytoplasmic. A helical membrane pass occupies residues 4–24 (AFVYVILGGGVAAGYAALEFT). FAD contacts are provided by residues 12–15 (GGVA), E39, R46, K51, and 145–146 (RD). Residues 25-458 (RRGVSDGELC…SASVVMIKKP (434 aa)) are Peroxisomal-facing. NAD(+)-binding positions include 170-176 (GGYIGME), E194, R200, and G259. Position 172–176 (172–176 (YIGME)) interacts with NADP(+). 2 residues coordinate NADP(+): R200 and G259. FAD is bound at residue D296. 312-313 (EH) is a binding site for NAD(+). Residue 312 to 313 (EH) coordinates NADP(+). FAD is bound at residue V314. R318 provides a ligand contact to L-ascorbate. An FAD-binding site is contributed by Y344. Y344 provides a ligand contact to NAD(+). Residue Y344 coordinates NADP(+). R346 contributes to the L-ascorbate binding site. The chain crosses the membrane as a helical span at residues 459–479 (LYVWHAATGVVVAASVAAFAF). The Cytoplasmic segment spans residues 480–488 (WYGRRRRRW).

The protein belongs to the FAD-dependent oxidoreductase family. Requires FAD as cofactor.

It is found in the peroxisome membrane. The catalysed reaction is 2 monodehydro-L-ascorbate radical + NADH + H(+) = 2 L-ascorbate + NAD(+). Catalyzes the conversion of monodehydroascorbate to ascorbate, oxidizing NADH in the process. Involved in the detoxification of H(2)O(2) that escapes the peroxisome and causes oxidative damage to oil bodies. This is Monodehydroascorbate reductase 4, peroxisomal from Arabidopsis thaliana (Mouse-ear cress).